Consider the following 250-residue polypeptide: Cell division protein ZapD (250 aa).

It belongs to the ZapD family. As to quaternary structure, interacts with FtsZ.

Its subcellular location is the cytoplasm. Functionally, cell division factor that enhances FtsZ-ring assembly. Directly interacts with FtsZ and promotes bundling of FtsZ protofilaments, with a reduction in FtsZ GTPase activity. This is Cell division protein ZapD from Bordetella petrii (strain ATCC BAA-461 / DSM 12804 / CCUG 43448).